Reading from the N-terminus, the 461-residue chain is Cysteine--tRNA ligase (461 aa).

Residue cysteine 28 coordinates Zn(2+). The 'HIGH' region signature appears at 30 to 40 (ITVYDLCHIGH). Zn(2+) contacts are provided by cysteine 209, histidine 234, and glutamate 238. The short motif at 266–270 (KMSKS) is the 'KMSKS' region element. ATP is bound at residue lysine 269.

The protein belongs to the class-I aminoacyl-tRNA synthetase family. Monomer. Requires Zn(2+) as cofactor.

Its subcellular location is the cytoplasm. The catalysed reaction is tRNA(Cys) + L-cysteine + ATP = L-cysteinyl-tRNA(Cys) + AMP + diphosphate. In Shigella sonnei (strain Ss046), this protein is Cysteine--tRNA ligase.